The sequence spans 92 residues: Large ribosomal subunit protein bL25 (92 aa).

Belongs to the bacterial ribosomal protein bL25 family. As to quaternary structure, part of the 50S ribosomal subunit; part of the 5S rRNA/L5/L18/L25 subcomplex. Contacts the 5S rRNA. Binds to the 5S rRNA independently of L5 and L18.

Its function is as follows. This is one of the proteins that binds to the 5S RNA in the ribosome where it forms part of the central protuberance. The sequence is that of Large ribosomal subunit protein bL25 from Aliivibrio fischeri (strain MJ11) (Vibrio fischeri).